Reading from the N-terminus, the 254-residue chain is Major prion protein (254 aa).

A signal peptide spans 1–22 (MANLSYWLLALFVATWTDVGLC). The interval 23–231 (KKRPKPGGWN…SQAYYDGRRS (209 aa)) is interaction with GRB2, ERI3 and SYN1. The interval 25–108 (RPKPGGWNTG…WNKPNKPKTS (84 aa)) is disordered. A run of 5 repeats spans residues 51–59 (PQGGGTWGQ), 60–67 (PHGGGWGQ), 68–75 (PHGGGWGQ), 76–83 (PHGGGWGQ), and 84–91 (PHGGGWGQ). The tract at residues 51-91 (PQGGGTWGQPHGGGWGQPHGGGWGQPHGGGWGQPHGGGWGQ) is 5 X 8 AA tandem repeats of P-H-G-G-G-W-G-Q. Gly residues predominate over residues 52–95 (QGGGTWGQPHGGGWGQPHGGGWGQPHGGGWGQPHGGGWGQGGGT). Residues His61, Gly62, Gly63, His69, Gly70, Gly71, His77, Gly78, Gly79, His85, Gly86, and Gly87 each contribute to the Cu(2+) site. The segment at 90-231 (GQGGGTHNQW…SQAYYDGRRS (142 aa)) is prP27-30 (protease resistant core). A disulfide bond links Cys179 and Cys214. 2 N-linked (GlcNAc...) asparagine glycosylation sites follow: Asn181 and Asn197. Residue Ser231 is the site of GPI-anchor amidated serine attachment. The propeptide at 232-254 (SAVLFSSPPVILLISFLIFLIVG) is removed in mature form.

It belongs to the prion family. In terms of assembly, monomer and homodimer. Has a tendency to aggregate into amyloid fibrils containing a cross-beta spine, formed by a steric zipper of superposed beta-strands. Soluble oligomers may represent an intermediate stage on the path to fibril formation. Copper binding may promote oligomerization. Interacts with GRB2, APP, ERI3/PRNPIP and SYN1. Mislocalized cytosolically exposed PrP interacts with MGRN1; this interaction alters MGRN1 subcellular location and causes lysosomal enlargement. Interacts with KIAA1191.

It localises to the cell membrane. Its subcellular location is the golgi apparatus. Functionally, its primary physiological function is unclear. Has cytoprotective activity against internal or environmental stresses. May play a role in neuronal development and synaptic plasticity. May be required for neuronal myelin sheath maintenance. May play a role in iron uptake and iron homeostasis. Soluble oligomers are toxic to cultured neuroblastoma cells and induce apoptosis (in vitro). Association with GPC1 (via its heparan sulfate chains) targets PRNP to lipid rafts. Also provides Cu(2+) or Zn(2+) for the ascorbate-mediated GPC1 deaminase degradation of its heparan sulfate side chains. The polypeptide is Major prion protein (PRNP) (Nothocricetulus migratorius (Gray dwarf hamster)).